The primary structure comprises 423 residues: Maltoporin 1 (423 aa).

An N-terminal signal peptide occupies residues Met1–Ala24.

This sequence belongs to the porin LamB (TC 1.B.3) family. As to quaternary structure, homotrimer formed of three 18-stranded antiparallel beta-barrels, containing three independent channels.

Its subcellular location is the cell outer membrane. It catalyses the reaction beta-maltose(in) = beta-maltose(out). In terms of biological role, involved in the transport of maltose and maltodextrins. This is Maltoporin 1 from Yersinia pestis bv. Antiqua (strain Antiqua).